Reading from the N-terminus, the 135-residue chain is Transcription antitermination protein NusB (135 aa).

This sequence belongs to the NusB family.

Its function is as follows. Involved in transcription antitermination. Required for transcription of ribosomal RNA (rRNA) genes. Binds specifically to the boxA antiterminator sequence of the ribosomal RNA (rrn) operons. The polypeptide is Transcription antitermination protein NusB (Clostridium perfringens (strain ATCC 13124 / DSM 756 / JCM 1290 / NCIMB 6125 / NCTC 8237 / Type A)).